Reading from the N-terminus, the 154-residue chain is Ribonuclease H (154 aa).

Residues 1–142 (MQKQIEIFTD…CDELAKKGAE (142 aa)) form the RNase H type-1 domain. Residues D10, E48, D70, and D134 each contribute to the Mg(2+) site.

This sequence belongs to the RNase H family. In terms of assembly, monomer. Mg(2+) is required as a cofactor.

The protein resides in the cytoplasm. The catalysed reaction is Endonucleolytic cleavage to 5'-phosphomonoester.. In terms of biological role, endonuclease that specifically degrades the RNA of RNA-DNA hybrids. This chain is Ribonuclease H, found in Haemophilus influenzae (strain 86-028NP).